The sequence spans 60 residues: Cytochrome c oxidase subunit 9, mitochondrial (60 aa).

Residues 1–18 (MSAIAPITGSLKKRIMKD) lie on the Mitochondrial matrix side of the membrane. The helical transmembrane segment at 19-37 (IAVGMGLGTVLGSYWWWGF) threads the bilayer. The Mitochondrial intermembrane segment spans residues 38-57 (HKPKIAARENYYTQLAEQKA). Positions 58–60 (AEE) are cleaved as a propeptide — removed in mature form.

It belongs to the fungal cytochrome c oxidase subunit 7a family. Component of the cytochrome c oxidase (complex IV, CIV), a multisubunit enzyme composed of a catalytic core of 3 subunits and several supernumerary subunits. The complex exists as a monomer or a dimer and forms supercomplexes (SCs) in the inner mitochondrial membrane with ubiquinol-cytochrome c oxidoreductase (cytochrome b-c1 complex, complex III, CIII).

The protein resides in the mitochondrion inner membrane. It functions in the pathway energy metabolism; oxidative phosphorylation. Component of the cytochrome c oxidase, the last enzyme in the mitochondrial electron transport chain which drives oxidative phosphorylation. The respiratory chain contains 3 multisubunit complexes succinate dehydrogenase (complex II, CII), ubiquinol-cytochrome c oxidoreductase (cytochrome b-c1 complex, complex III, CIII) and cytochrome c oxidase (complex IV, CIV), that cooperate to transfer electrons derived from NADH and succinate to molecular oxygen, creating an electrochemical gradient over the inner membrane that drives transmembrane transport and the ATP synthase. Cytochrome c oxidase is the component of the respiratory chain that catalyzes the reduction of oxygen to water. Electrons originating from reduced cytochrome c in the intermembrane space (IMS) are transferred via the dinuclear copper A center (CU(A)) of subunit 2 and heme A of subunit 1 to the active site in subunit 1, a binuclear center (BNC) formed by heme A3 and copper B (CU(B)). The BNC reduces molecular oxygen to 2 water molecules using 4 electrons from cytochrome c in the IMS and 4 protons from the mitochondrial matrix. In Eremothecium gossypii (strain ATCC 10895 / CBS 109.51 / FGSC 9923 / NRRL Y-1056) (Yeast), this protein is Cytochrome c oxidase subunit 9, mitochondrial (COX9).